The primary structure comprises 257 residues: Transcription factor bHLH55 (257 aa).

Residues 74-126 (NKRAKHKELERQRRQENTSLFKILRYLLPSQYIKGKRSSADHVLEAVNYIKDL) enclose the bHLH domain.

In terms of assembly, homodimer. Expressed in roots, leaves, stems, and flowers.

The protein resides in the nucleus. In Arabidopsis thaliana (Mouse-ear cress), this protein is Transcription factor bHLH55 (BHLH55).